Here is a 745-residue protein sequence, read N- to C-terminus: Cytoskeleton-associated protein 2-like (745 aa).

Disordered regions lie at residues 26–305 (KGKL…VNRV), 319–362 (PATE…LGPQ), 422–483 (FPPQ…TYKR), and 608–638 (EAVTSDTSAAGTNTTSAEELAKEESEQPCPS). Polar residues-rich tracts occupy residues 67–89 (SKTTRPINIKFQTKPASITASQK) and 101–136 (GLTSRCFSSNTDCKQSSKPQQQPRAVSFTAGLSRNP). A KEN box motif is present at residues 183–185 (KEN). Residues 192 to 202 (KPEKPDPELHS) are compositionally biased toward basic and acidic residues. K195 is covalently cross-linked (Glycyl lysine isopeptide (Lys-Gly) (interchain with G-Cter in SUMO1); alternate). K195 participates in a covalent cross-link: Glycyl lysine isopeptide (Lys-Gly) (interchain with G-Cter in SUMO2); alternate. 4 stretches are compositionally biased toward polar residues: residues 205 to 216 (KPNTGSSNQTQK), 224 to 233 (LSKSSVTQTA), 242 to 253 (FIRNTQIRTQAV), and 284 to 301 (NKTQTSKKPMTKNTQDIT). Residues 427 to 442 (HFLNKTAPRTQASTAA) are compositionally biased toward polar residues. Positions 459–475 (KKPEGEDRRKQLEEWQK) are enriched in basic and acidic residues. The segment covering 608-624 (EAVTSDTSAAGTNTTSA) has biased composition (polar residues). S745 is modified (phosphoserine).

It belongs to the CKAP2 family. Ubiquitinated by the anaphase promoting complex/cyclosome (APC/C). Highly expressed in regions of active neurogenesis and neural stem/progenitor cells (NSPCs), both embryonic and adult, not detected in lung, liver, kidney, heart, and skeletal muscle.

The protein localises to the cytoplasm. The protein resides in the cytoskeleton. It is found in the spindle pole. Microtubule-associated protein required for mitotic spindle formation and cell-cycle progression in neural progenitor cells. The chain is Cytoskeleton-associated protein 2-like (Ckap2l) from Mus musculus (Mouse).